Reading from the N-terminus, the 658-residue chain is Threonine--tRNA ligase (658 aa).

A TGS domain is found at 1–64; that stretch reads MSCSVSLSFP…GQSGQIEIIT (64 aa). The interval 246-549 is catalytic; the sequence is DHRRLGREMD…LIENFAGHMP (304 aa). Positions 343, 394, and 526 each coordinate Zn(2+).

It belongs to the class-II aminoacyl-tRNA synthetase family. As to quaternary structure, homodimer. Requires Zn(2+) as cofactor.

It localises to the cytoplasm. It carries out the reaction tRNA(Thr) + L-threonine + ATP = L-threonyl-tRNA(Thr) + AMP + diphosphate + H(+). Functionally, catalyzes the attachment of threonine to tRNA(Thr) in a two-step reaction: L-threonine is first activated by ATP to form Thr-AMP and then transferred to the acceptor end of tRNA(Thr). Also edits incorrectly charged L-seryl-tRNA(Thr). The protein is Threonine--tRNA ligase of Bartonella quintana (strain Toulouse) (Rochalimaea quintana).